The primary structure comprises 532 residues: Fatty aldehyde dehydrogenase HFD1 (532 aa).

Position 111 is a phosphoserine (Ser111). Residues 134–152 (IIAPFNFPLLLAFAPLAAA) form a helical membrane-spanning segment. 214–219 (GSPRVG) serves as a coordination point for NAD(+). Active-site residues include Glu236 and Cys273.

The protein belongs to the aldehyde dehydrogenase family.

The protein resides in the lipid droplet. Its subcellular location is the mitochondrion outer membrane. The protein localises to the endosome membrane. It localises to the cytoplasmic granule membrane. It catalyses the reaction an aldehyde + NAD(+) + H2O = a carboxylate + NADH + 2 H(+). The enzyme catalyses hexadecanoate + NADH + 2 H(+) = hexadecanal + NAD(+) + H2O. It carries out the reaction 4-hydroxybenzaldehyde + NAD(+) + H2O = 4-hydroxybenzoate + NADH + 2 H(+). Catalyzes the oxidation of long-chain aliphatic aldehydes to fatty acids. Responsible for conversion of the sphingosine 1-phosphate (S1P) degradation product hexadecenal to hexadecenoic acid. Involved in coenzyme Q (CoQ) biosynthesis, catalyzing the last step in the tyrosine to 4-hydroxybenzoate (4-HB) pathway. Oxidizes 4-hydroxybenzaldehyde (4-Hbz) to 4-HB, the aromatic precursor for coenzyme Q. The sequence is that of Fatty aldehyde dehydrogenase HFD1 (HFD1) from Saccharomyces cerevisiae (strain ATCC 204508 / S288c) (Baker's yeast).